Here is a 583-residue protein sequence, read N- to C-terminus: MIQRMSKLFVRTLREDPADAEVPSHRLLVRAGYIRRVAPGIYSWLPLGYAVLRKIEEIVRQEMLHIGGQEVHFPALIPREIYEASGRWNEYGDTLFRLKDRKGADYLLGPTHEELFTLLVKGEYSSYKDYPVILFQIQTKYRDEARPRAGILRGREFVMKDSYSFDLDDAGLAASYTAHREAYRRIFDRLGLRYRIVSAVSGAMGGSASEEFLAVTEVGEDAFVYCRNCDYAANTEAVEIGVPDRLDPTGQPPPQVLDTPDTPTIDALVDRLNSLDLGRRFTAADTLKNVVLKTKAPGADDWELLVVGVPGDRDVDLKRLAGQLDPIQVEPATAEDLARRPELVRGYIGPQILRRIGVRYLVDPLVVPGSAWVTGANEPDKHMANVVRGRDFEPDGEIGAATIRDGDPCGRCGGRLALAQGIEIGHIFQLGRKYTDAFELDALGPDGRPIRITMGSYGIGVSRAVAAIAEQCHDDAGLIWPRSVSPADVHVVIAGKGEQEKLAEEFAAALDTAGLDVLLDDRVDASAGVKFADAELIGIPSIAVVGRGAARGVVEVRDRGSGERRELALTDAVAELRTLAAGA.

Belongs to the class-II aminoacyl-tRNA synthetase family. ProS type 1 subfamily. As to quaternary structure, homodimer.

It is found in the cytoplasm. It catalyses the reaction tRNA(Pro) + L-proline + ATP = L-prolyl-tRNA(Pro) + AMP + diphosphate. Its function is as follows. Catalyzes the attachment of proline to tRNA(Pro) in a two-step reaction: proline is first activated by ATP to form Pro-AMP and then transferred to the acceptor end of tRNA(Pro). As ProRS can inadvertently accommodate and process non-cognate amino acids such as alanine and cysteine, to avoid such errors it has two additional distinct editing activities against alanine. One activity is designated as 'pretransfer' editing and involves the tRNA(Pro)-independent hydrolysis of activated Ala-AMP. The other activity is designated 'posttransfer' editing and involves deacylation of mischarged Ala-tRNA(Pro). The misacylated Cys-tRNA(Pro) is not edited by ProRS. The chain is Proline--tRNA ligase from Acidothermus cellulolyticus (strain ATCC 43068 / DSM 8971 / 11B).